The primary structure comprises 478 residues: Protein nucleotidyltransferase YdiU (478 aa).

Residues Gly-83, Gly-85, Arg-86, Lys-106, Asp-118, Gly-119, Arg-169, and Arg-176 each coordinate ATP. Asp-245 (proton acceptor) is an active-site residue. Residues Asn-246 and Asp-255 each contribute to the Mg(2+) site. Asp-255 is an ATP binding site.

It belongs to the SELO family. It depends on Mg(2+) as a cofactor. Mn(2+) serves as cofactor.

It carries out the reaction L-seryl-[protein] + ATP = 3-O-(5'-adenylyl)-L-seryl-[protein] + diphosphate. The enzyme catalyses L-threonyl-[protein] + ATP = 3-O-(5'-adenylyl)-L-threonyl-[protein] + diphosphate. It catalyses the reaction L-tyrosyl-[protein] + ATP = O-(5'-adenylyl)-L-tyrosyl-[protein] + diphosphate. The catalysed reaction is L-histidyl-[protein] + UTP = N(tele)-(5'-uridylyl)-L-histidyl-[protein] + diphosphate. It carries out the reaction L-seryl-[protein] + UTP = O-(5'-uridylyl)-L-seryl-[protein] + diphosphate. The enzyme catalyses L-tyrosyl-[protein] + UTP = O-(5'-uridylyl)-L-tyrosyl-[protein] + diphosphate. Its function is as follows. Nucleotidyltransferase involved in the post-translational modification of proteins. It can catalyze the addition of adenosine monophosphate (AMP) or uridine monophosphate (UMP) to a protein, resulting in modifications known as AMPylation and UMPylation. This Exiguobacterium sp. (strain ATCC BAA-1283 / AT1b) protein is Protein nucleotidyltransferase YdiU.